A 515-amino-acid chain; its full sequence is Ribose import ATP-binding protein RbsA 1 (515 aa).

2 consecutive ABC transporter domains span residues F8–E244 and V256–H503. G40–S47 is a binding site for ATP.

It belongs to the ABC transporter superfamily. Ribose importer (TC 3.A.1.2.1) family. The complex is composed of an ATP-binding protein (RbsA), two transmembrane proteins (RbsC) and a solute-binding protein (RbsB).

The protein localises to the cell inner membrane. It catalyses the reaction D-ribose(out) + ATP + H2O = D-ribose(in) + ADP + phosphate + H(+). Its function is as follows. Part of the ABC transporter complex RbsABC involved in ribose import. Responsible for energy coupling to the transport system. The protein is Ribose import ATP-binding protein RbsA 1 of Mesorhizobium japonicum (strain LMG 29417 / CECT 9101 / MAFF 303099) (Mesorhizobium loti (strain MAFF 303099)).